The primary structure comprises 1002 residues: DNA-directed RNA polymerase 1B, mitochondrial (1002 aa).

The N-terminal 21 residues, 1 to 21 (MWRYISKHAYSRKFRNSHDSA), are a transit peptide targeting the mitochondrion. Catalysis depends on residues Asp-703, Lys-778, and Asp-935.

Belongs to the phage and mitochondrial RNA polymerase family.

The protein localises to the mitochondrion. The enzyme catalyses RNA(n) + a ribonucleoside 5'-triphosphate = RNA(n+1) + diphosphate. Functionally, DNA-dependent RNA polymerase catalyzes the transcription of DNA into RNA using the four ribonucleoside triphosphates as substrates. The chain is DNA-directed RNA polymerase 1B, mitochondrial (RPOT1-TOM) from Nicotiana tabacum (Common tobacco).